The sequence spans 97 residues: Kininogen-1 (97 aa).

The N-terminal stretch at 1 to 23 (MRLWFCLSFLIILCVEHFPGTLA) is a signal peptide.

Belongs to the bradykinin-related peptide family. Expressed by the skin glands.

It localises to the secreted. Its function is as follows. [Ala3,Thr6]bradykinin: produces in vitro relaxation of rat arterial smooth muscle and constriction of intestinal smooth muscle. Possesses insulin-releasing activity. May target bradykinin receptors (BDKRB). The protein is Kininogen-1 of Bombina variegata (Yellow-bellied toad).